A 271-amino-acid chain; its full sequence is Formamidopyrimidine-DNA glycosylase (271 aa).

P2 acts as the Schiff-base intermediate with DNA in catalysis. Residue E3 is the Proton donor of the active site. K58 acts as the Proton donor; for beta-elimination activity in catalysis. Residues H92, R111, and R152 each contribute to the DNA site. An FPG-type zinc finger spans residues 237-271; it reads SVYGREGEACKQCGRVLKHATIGQRATVWCGSCQR. R261 serves as the catalytic Proton donor; for delta-elimination activity.

Belongs to the FPG family. Monomer. The cofactor is Zn(2+).

It carries out the reaction Hydrolysis of DNA containing ring-opened 7-methylguanine residues, releasing 2,6-diamino-4-hydroxy-5-(N-methyl)formamidopyrimidine.. The enzyme catalyses 2'-deoxyribonucleotide-(2'-deoxyribose 5'-phosphate)-2'-deoxyribonucleotide-DNA = a 3'-end 2'-deoxyribonucleotide-(2,3-dehydro-2,3-deoxyribose 5'-phosphate)-DNA + a 5'-end 5'-phospho-2'-deoxyribonucleoside-DNA + H(+). In terms of biological role, involved in base excision repair of DNA damaged by oxidation or by mutagenic agents. Acts as a DNA glycosylase that recognizes and removes damaged bases. Has a preference for oxidized purines, such as 7,8-dihydro-8-oxoguanine (8-oxoG). Has AP (apurinic/apyrimidinic) lyase activity and introduces nicks in the DNA strand. Cleaves the DNA backbone by beta-delta elimination to generate a single-strand break at the site of the removed base with both 3'- and 5'-phosphates. The sequence is that of Formamidopyrimidine-DNA glycosylase from Xanthomonas euvesicatoria pv. vesicatoria (strain 85-10) (Xanthomonas campestris pv. vesicatoria).